The primary structure comprises 290 residues: Appressoria-specific virulence factor GAS2 (290 aa).

The signal sequence occupies residues 1–19 (MKYTSAILISAFAATNVFA). The N-linked (GlcNAc...) asparagine glycan is linked to N99. Residues 121–140 (LPRAGGGTSTPKGTEETGVK) form a disordered region.

The protein localises to the cytoplasm. In terms of biological role, appressoria-specific virulence factor required for appressorial penetration in host and lesion development. The chain is Appressoria-specific virulence factor GAS2 from Pyricularia oryzae (strain 70-15 / ATCC MYA-4617 / FGSC 8958) (Rice blast fungus).